A 303-amino-acid polypeptide reads, in one-letter code: UDP-N-acetylenolpyruvoylglucosamine reductase (303 aa).

Positions K27–I217 constitute an FAD-binding PCMH-type domain. R175 is a catalytic residue. S224 serves as the catalytic Proton donor. E294 is an active-site residue.

It belongs to the MurB family. Requires FAD as cofactor.

The protein localises to the cytoplasm. The catalysed reaction is UDP-N-acetyl-alpha-D-muramate + NADP(+) = UDP-N-acetyl-3-O-(1-carboxyvinyl)-alpha-D-glucosamine + NADPH + H(+). The protein operates within cell wall biogenesis; peptidoglycan biosynthesis. Its function is as follows. Cell wall formation. This Orientia tsutsugamushi (strain Ikeda) (Rickettsia tsutsugamushi) protein is UDP-N-acetylenolpyruvoylglucosamine reductase.